The chain runs to 287 residues: uncharacterized protein (287 aa).

The tract at residues 1–44 is disordered; the sequence is MAAPRNLTGDGGARQLVKDEESPAASSAAKGLLNDDSPTGKRTK. Position 37 is a phosphoserine (S37). 5 consecutive transmembrane segments (helical) span residues 55–75, 124–144, 147–167, 218–238, and 260–280; these read FAVF…IYLT, TFMI…FGVV, FVLV…LSKL, PIVD…LMPA, and DFKT…PALL.

The protein resides in the membrane. This is an uncharacterized protein from Arabidopsis thaliana (Mouse-ear cress).